The following is a 170-amino-acid chain: uncharacterized protein (170 aa).

Residues 15-81 are a coiled coil; that stretch reads EAFDEKAEKE…EREKSKSAVS (67 aa). The span at 20-77 shows a compositional bias: basic and acidic residues; it reads KAEKEKVEKEKALKEKTEKEKAEKEKAEKEKVEKEKAEKEKAAKEKAAKEKAEREKSK. The tract at residues 20 to 95 is disordered; sequence KAEKEKVEKE…NQNSNKGNVE (76 aa). Polar residues predominate over residues 78-92; that stretch reads SAVSPATTNQNSNKG. The chain crosses the membrane as a helical span at residues 98 to 118; that stretch reads VAIGVLAGGAVTGVAVGGAYL.

It is found in the membrane. This is an uncharacterized protein from Dictyostelium discoideum (Social amoeba).